The following is a 493-amino-acid chain: Protein nucleotidyltransferase YdiU (493 aa).

Residues glycine 81, glycine 83, arginine 84, lysine 103, aspartate 115, glycine 116, arginine 166, and arginine 173 each coordinate ATP. Residue aspartate 244 is the Proton acceptor of the active site. Asparagine 245 and aspartate 254 together coordinate Mg(2+). Aspartate 254 contributes to the ATP binding site.

It belongs to the SELO family. Mg(2+) serves as cofactor. The cofactor is Mn(2+).

The catalysed reaction is L-seryl-[protein] + ATP = 3-O-(5'-adenylyl)-L-seryl-[protein] + diphosphate. It carries out the reaction L-threonyl-[protein] + ATP = 3-O-(5'-adenylyl)-L-threonyl-[protein] + diphosphate. It catalyses the reaction L-tyrosyl-[protein] + ATP = O-(5'-adenylyl)-L-tyrosyl-[protein] + diphosphate. The enzyme catalyses L-histidyl-[protein] + UTP = N(tele)-(5'-uridylyl)-L-histidyl-[protein] + diphosphate. The catalysed reaction is L-seryl-[protein] + UTP = O-(5'-uridylyl)-L-seryl-[protein] + diphosphate. It carries out the reaction L-tyrosyl-[protein] + UTP = O-(5'-uridylyl)-L-tyrosyl-[protein] + diphosphate. Its function is as follows. Nucleotidyltransferase involved in the post-translational modification of proteins. It can catalyze the addition of adenosine monophosphate (AMP) or uridine monophosphate (UMP) to a protein, resulting in modifications known as AMPylation and UMPylation. The sequence is that of Protein nucleotidyltransferase YdiU from Shewanella frigidimarina (strain NCIMB 400).